The following is a 220-amino-acid chain: Protein-L-isoaspartate O-methyltransferase (220 aa).

Residue Ser64 is part of the active site.

Belongs to the methyltransferase superfamily. L-isoaspartyl/D-aspartyl protein methyltransferase family.

Its subcellular location is the cytoplasm. The catalysed reaction is [protein]-L-isoaspartate + S-adenosyl-L-methionine = [protein]-L-isoaspartate alpha-methyl ester + S-adenosyl-L-homocysteine. Catalyzes the methyl esterification of L-isoaspartyl residues in peptides and proteins that result from spontaneous decomposition of normal L-aspartyl and L-asparaginyl residues. It plays a role in the repair and/or degradation of damaged proteins. This is Protein-L-isoaspartate O-methyltransferase from Methanoculleus marisnigri (strain ATCC 35101 / DSM 1498 / JR1).